The following is a 125-amino-acid chain: uncharacterized protein (125 aa).

The helical transmembrane segment at 96–113 threads the bilayer; it reads LFMMSIVSSYVCYITVLL.

The protein localises to the membrane. This is an uncharacterized protein from Saccharomyces cerevisiae (strain ATCC 204508 / S288c) (Baker's yeast).